The following is a 272-amino-acid chain: MSIYTNSKPWTVPALAEAKRNGSKIVMLTAYDAGFARILDANGVDLVLVGDSLGMVVQGHDSTLPVSVHDMVYHTACVARGVRQAMLVVDLPFQADASPERALEAATALLRVGAQMIKIEGAGHKLEVISYLVEREIPVCSHLGLTPQSVLRLGGYKVQGRGEEAGGRLRAEARAAVEAGATLLLLECVPSQLAAQITTDVSVPTIGIGAGAGCDGQVLVLHDLLGLDSGHPRPKFVKDFLAHGGSVAGAVRAYANAVRDGSFPDVEHTYTS.

Positions 51 and 90 each coordinate Mg(2+). 3-methyl-2-oxobutanoate is bound by residues 51–52 (DS), Asp-90, and Lys-118. Glu-120 lines the Mg(2+) pocket. The active-site Proton acceptor is the Glu-187.

Belongs to the PanB family. As to quaternary structure, homodecamer; pentamer of dimers. Mg(2+) is required as a cofactor.

It localises to the cytoplasm. The enzyme catalyses 3-methyl-2-oxobutanoate + (6R)-5,10-methylene-5,6,7,8-tetrahydrofolate + H2O = 2-dehydropantoate + (6S)-5,6,7,8-tetrahydrofolate. Its pathway is cofactor biosynthesis; (R)-pantothenate biosynthesis; (R)-pantoate from 3-methyl-2-oxobutanoate: step 1/2. Its function is as follows. Catalyzes the reversible reaction in which hydroxymethyl group from 5,10-methylenetetrahydrofolate is transferred onto alpha-ketoisovalerate to form ketopantoate. The chain is 3-methyl-2-oxobutanoate hydroxymethyltransferase from Xylella fastidiosa (strain M12).